A 296-amino-acid polypeptide reads, in one-letter code: MMSRDLDIANPARTRAIMHTYGLQVKKSLGQNFLTDQNVLHNIVATADIGTNDNVIEIGPGIGALTEYLARAAHHVLAFEIDDRLLPILDETLADYDNVTVVNQDILKADLAAMISEHLDNERPLKLVANLPYYITTPILMNILAGDVAFENIVVMMQKEVADRLAAEPGTKAYGALTIAVQYRMAAEMAMVVPRTVFVPSPNVDSAIVKLTALPLRTHVPFDEAAFFKVVKAGFAHRRKNLWNNLQSLFGKQPETKTAIQQALDIATIDPKIRAERLTVDEFITLTDALHQADLL.

Positions 32, 34, 59, 80, 105, and 130 each coordinate S-adenosyl-L-methionine.

Belongs to the class I-like SAM-binding methyltransferase superfamily. rRNA adenine N(6)-methyltransferase family. RsmA subfamily.

It localises to the cytoplasm. The enzyme catalyses adenosine(1518)/adenosine(1519) in 16S rRNA + 4 S-adenosyl-L-methionine = N(6)-dimethyladenosine(1518)/N(6)-dimethyladenosine(1519) in 16S rRNA + 4 S-adenosyl-L-homocysteine + 4 H(+). Functionally, specifically dimethylates two adjacent adenosines (A1518 and A1519) in the loop of a conserved hairpin near the 3'-end of 16S rRNA in the 30S particle. May play a critical role in biogenesis of 30S subunits. The protein is Ribosomal RNA small subunit methyltransferase A of Lactiplantibacillus plantarum (strain ATCC BAA-793 / NCIMB 8826 / WCFS1) (Lactobacillus plantarum).